The following is a 246-amino-acid chain: Pyrroloquinoline-quinone synthase (246 aa).

Belongs to the PqqC family.

The catalysed reaction is 6-(2-amino-2-carboxyethyl)-7,8-dioxo-1,2,3,4,7,8-hexahydroquinoline-2,4-dicarboxylate + 3 O2 = pyrroloquinoline quinone + 2 H2O2 + 2 H2O + H(+). It functions in the pathway cofactor biosynthesis; pyrroloquinoline quinone biosynthesis. Functionally, ring cyclization and eight-electron oxidation of 3a-(2-amino-2-carboxyethyl)-4,5-dioxo-4,5,6,7,8,9-hexahydroquinoline-7,9-dicarboxylic-acid to PQQ. This is Pyrroloquinoline-quinone synthase from Acidiphilium cryptum (strain JF-5).